The following is a 144-amino-acid chain: Transcriptional regulator SlyA (144 aa).

Residues 2-135 (ESPLGSDLAR…LITLIAKLEH (134 aa)) enclose the HTH marR-type domain. Residues 49 to 72 (QIQLAKAIGIEQPSLVRTLDQLEE) constitute a DNA-binding region (H-T-H motif).

This sequence belongs to the SlyA family. Homodimer.

Transcription regulator that can specifically activate or repress expression of target genes. This is Transcriptional regulator SlyA from Escherichia coli (strain 55989 / EAEC).